A 229-amino-acid chain; its full sequence is Flagellar L-ring protein (229 aa).

A signal peptide spans 1-23 (MLSRLGARVLYCLAGLALLASGG). Cys24 carries the N-palmitoyl cysteine lipid modification. The S-diacylglycerol cysteine moiety is linked to residue Cys24.

This sequence belongs to the FlgH family. As to quaternary structure, the basal body constitutes a major portion of the flagellar organelle and consists of four rings (L,P,S, and M) mounted on a central rod.

The protein resides in the cell outer membrane. Its subcellular location is the bacterial flagellum basal body. In terms of biological role, assembles around the rod to form the L-ring and probably protects the motor/basal body from shearing forces during rotation. The sequence is that of Flagellar L-ring protein from Cupriavidus pinatubonensis (strain JMP 134 / LMG 1197) (Cupriavidus necator (strain JMP 134)).